The sequence spans 351 residues: Heme A synthase (351 aa).

Transmembrane regions (helical) follow at residues 17-37 (WLILMALMVYAIILVGGATRL), 103-123 (LIGLVAVAGFAFFAWRRWLGQ), 129-149 (LVGLIALGGLQGAIGWWMVSS), 164-184 (LMTHFTLALLILAVIAWLWLD), 201-221 (AMALMGLIFVQMAAGALVAGL), 261-281 (FNHRLLAYGLWAGSLAAAWAF), 289-309 (EFAFLAVLVSAQAVWGILTLV), and 316-336 (LALVHQGLGVVTTLWAVYTVW). H263 lines the heme pocket. H320 provides a ligand contact to heme.

It belongs to the COX15/CtaA family. Type 2 subfamily. Interacts with CtaB. Heme b serves as cofactor.

Its subcellular location is the cell membrane. The catalysed reaction is Fe(II)-heme o + 2 A + H2O = Fe(II)-heme a + 2 AH2. Its pathway is porphyrin-containing compound metabolism; heme A biosynthesis; heme A from heme O: step 1/1. Its function is as follows. Catalyzes the conversion of heme O to heme A by two successive hydroxylations of the methyl group at C8. The first hydroxylation forms heme I, the second hydroxylation results in an unstable dihydroxymethyl group, which spontaneously dehydrates, resulting in the formyl group of heme A. The protein is Heme A synthase of Hyphomonas neptunium (strain ATCC 15444).